Here is a 478-residue protein sequence, read N- to C-terminus: Glutamine synthetase (478 aa).

An Isoglutamyl lysine isopeptide (Lys-Gln) (interchain with Q-Cter in protein Pup) cross-link involves residue Lys-14. The region spanning 16 to 100 (ENVEYVDIRF…MNFFVHDPFT (85 aa)) is the GS beta-grasp domain. In terms of domain architecture, GS catalytic spans 108 to 478 (PRNVARKAEN…PYEFSLYYDV (371 aa)). Positions 133 and 135 each coordinate Mg(2+). Residue Glu-214 coordinates ATP. Residues Glu-219 and Glu-227 each contribute to the Mg(2+) site. 230–232 (YKF) contributes to the ATP binding site. L-glutamate-binding positions include 271 to 272 (NG) and Gly-272. Mg(2+) is bound at residue His-276. ATP contacts are provided by residues 278-280 (HQS) and Ser-280. The L-glutamate site is built by Arg-329, Glu-335, and Arg-347. ATP-binding residues include Arg-347, Arg-352, and Lys-361. Glu-366 contacts Mg(2+). Residue Arg-368 coordinates L-glutamate. Tyr-406 carries the post-translational modification O-AMP-tyrosine.

Belongs to the glutamine synthetase family. As to quaternary structure, oligomer of 12 subunits arranged in the form of two hexagons. Mg(2+) serves as cofactor.

The protein localises to the cytoplasm. It carries out the reaction L-glutamate + NH4(+) + ATP = L-glutamine + ADP + phosphate + H(+). With respect to regulation, when cellular nitrogen levels are high, the C-terminal adenylyl transferase (AT) of GlnE inhibits GlnA by covalent transfer of an adenylyl group from ATP to Tyr-406. Conversely, when nitrogen levels are low, the N-terminal adenylyl removase (AR) of GlnE activates GlnA by removing the adenylyl group by phosphorolysis. The fully adenylated enzyme complex is inactive. Functionally, involved in nitrogen metabolism via ammonium assimilation. Catalyzes the ATP-dependent biosynthesis of glutamine from glutamate and ammonia. The polypeptide is Glutamine synthetase (Mycolicibacterium smegmatis (strain ATCC 700084 / mc(2)155) (Mycobacterium smegmatis)).